A 485-amino-acid polypeptide reads, in one-letter code: MSEGVEAIVANDNGTDQVNGNRTGKDNEEHDGSTGSNLSNFLWHGGSVWDAWFSCASNQVAQVLLTLPYSFSQLGMLSGIVLQIFYGLLGSWTAYLISVLYVEYRARKEKEGKSFKNHVIQWFEVLDGLLGSYWKALGLAFNCTFLLFGSVIQLIACASNIYYINDHLDKRTWTYIFGACCATTVFIPSFHNYRIWSFLGLGMTTYTAWYLAIASIIHGQAEGVKHSGPTKLVLYFTGATNILYTFGGHAVTVEIMHAMWKPQKFKYIYLMATLYVFTLTIPSAAAVYWAFGDALLDHSNAFSLMPKNAWRDAAVILMLIHQFITFGFACTPLYFVWEKVIGMHDTKSICLRALARLPVVIPIWFLAIIFPFFGPINSAVGALLVSFTVYIIPSLAHMLTYRSASARQNAAEKPPFFMPSWTAMYVLNAFVVVWVLIVGFGFGGWASVTNFVRQVDTFGLFAKCYQCKPAAAAAHAPVSALHHRL.

The Cytoplasmic portion of the chain corresponds to 1 to 59 (MSEGVEAIVANDNGTDQVNGNRTGKDNEEHDGSTGSNLSNFLWHGGSVWDAWFSCASNQ). Polar residues predominate over residues 12-22 (DNGTDQVNGNR). The tract at residues 12-33 (DNGTDQVNGNRTGKDNEEHDGS) is disordered. Positions 23-32 (TGKDNEEHDG) are enriched in basic and acidic residues. Residues 60–77 (VAQVLLTLPYSFSQLGML) form a helical membrane-spanning segment. Residues 78–79 (SG) lie on the Extracellular side of the membrane. A helical transmembrane segment spans residues 80–100 (IVLQIFYGLLGSWTAYLISVL). The Cytoplasmic segment spans residues 101-135 (YVEYRARKEKEGKSFKNHVIQWFEVLDGLLGSYWK). A helical membrane pass occupies residues 136–156 (ALGLAFNCTFLLFGSVIQLIA). Residues 157 to 172 (CASNIYYINDHLDKRT) lie on the Extracellular side of the membrane. Residues 173-193 (WTYIFGACCATTVFIPSFHNY) form a helical membrane-spanning segment. Over 194-196 (RIW) the chain is Cytoplasmic. Residues 197–217 (SFLGLGMTTYTAWYLAIASII) traverse the membrane as a helical segment. The Extracellular segment spans residues 218 to 232 (HGQAEGVKHSGPTKL). A helical membrane pass occupies residues 233-253 (VLYFTGATNILYTFGGHAVTV). The Cytoplasmic portion of the chain corresponds to 254–266 (EIMHAMWKPQKFK). Residues 267 to 287 (YIYLMATLYVFTLTIPSAAAV) form a helical membrane-spanning segment. At 288–314 (YWAFGDALLDHSNAFSLMPKNAWRDAA) the chain is on the extracellular side. A helical transmembrane segment spans residues 315-335 (VILMLIHQFITFGFACTPLYF). Over 336 to 356 (VWEKVIGMHDTKSICLRALAR) the chain is Cytoplasmic. A helical transmembrane segment spans residues 357-377 (LPVVIPIWFLAIIFPFFGPIN). A topological domain (extracellular) is located at residue serine 378. Residues 379–399 (AVGALLVSFTVYIIPSLAHML) form a helical membrane-spanning segment. The Cytoplasmic portion of the chain corresponds to 400–425 (TYRSASARQNAAEKPPFFMPSWTAMY). A helical transmembrane segment spans residues 426–446 (VLNAFVVVWVLIVGFGFGGWA). The Extracellular portion of the chain corresponds to 447 to 485 (SVTNFVRQVDTFGLFAKCYQCKPAAAAAHAPVSALHHRL).

The protein belongs to the amino acid/polyamine transporter 2 family. Amino acid/auxin permease (AAAP) (TC 2.A.18.1) subfamily. As to expression, expressed in root and shoot apical tissues. In root apex, confined to stele initials, protophloem poles, statolith-containing S2 columella cells, lateral root cap cells (LRC), and in epidermal cells from the distal elongation zone (DEZ) up to central elongation zone (CEZ).

Its subcellular location is the cell membrane. Auxin uptake mediated by AUX1 is inhibited by chromosaponin-1 (CSI), 1-naphthoxyacetic acid (1-NOA) and 3-chloro-4-hydroxyphenylacetic acid (CHPAA). Carrier protein involved in proton-driven auxin influx. Mediates the formation of auxin gradient from developing leaves (site of auxin biosynthesis) to tips by contributing to the loading of auxin in vascular tissues and facilitating acropetal (base to tip) auxin transport within inner tissues of the root apex, and basipetal (tip to base) auxin transport within outer tissues of the root apex. Unloads auxin from the mature phloem to deliver the hormone to the root meristem via the protophloem cell files. Coordinated subcellular localization of AUX1 is regulated by a brefeldin A-sensitive (BFA) vesicle trafficking process. Involved in lateral root formation, trichoblast polarization and root hair elongation. Required for gravitropism and thigmotropism, especially in roots, by modulating responses to auxin, ethylene and cytokinins such as benzyladenine (BA). Needed for ammonium-mediated root-growth inhibition. Confers sensitivity to the herbicide 2,4-dichlorophenoxyacetic acid (2,4-D, auxin analog), and to polar auxin transport inhibitors such as N-1-naphthylphthalamic acid (NPA) and 2,3,5-triiodobenzoic acid (TIBA). In Arabidopsis thaliana (Mouse-ear cress), this protein is Auxin transporter protein 1 (AUX1).